The primary structure comprises 338 residues: Tryptophan--tRNA ligase (338 aa).

Residues 11–13 and 19–20 contribute to the ATP site; these read QPS and GN. Positions 12–20 match the 'HIGH' region motif; it reads PSGELSIGN. Residue Asp135 coordinates L-tryptophan. ATP is bound by residues 147–149, Val189, and 198–202; these read GSD and KMSKS. Residues 198 to 202 carry the 'KMSKS' region motif; it reads KMSKS.

This sequence belongs to the class-I aminoacyl-tRNA synthetase family. Homodimer.

The protein localises to the cytoplasm. It carries out the reaction tRNA(Trp) + L-tryptophan + ATP = L-tryptophyl-tRNA(Trp) + AMP + diphosphate + H(+). In terms of biological role, catalyzes the attachment of tryptophan to tRNA(Trp). The polypeptide is Tryptophan--tRNA ligase (Vibrio cholerae serotype O1 (strain ATCC 39315 / El Tor Inaba N16961)).